The sequence spans 225 residues: MGQEICVISFSGGQDSTTLAIWAAKRFKKVYLVGFDYAQKHSVELECAQKIASLLKLPYEIIQLDFLENITHSALFKNSNDLIGHSHVQNKDLPNSFVPNRNAIFITLLHSYAQKLGANNIALGVSQADFSGYPDCKEDFIKSIEHALNLGSNTTIKIVTPLMFLSKAQEFQMAKDLGALDLIIKETHTCYQGERKILHAYGYGCGECLACQLRKKGYEEFQARF.

10 to 20 (FSGGQDSTTLA) provides a ligand contact to ATP. Zn(2+) contacts are provided by C190, C205, C208, and C211.

The protein belongs to the QueC family. Requires Zn(2+) as cofactor.

The catalysed reaction is 7-carboxy-7-deazaguanine + NH4(+) + ATP = 7-cyano-7-deazaguanine + ADP + phosphate + H2O + H(+). Its pathway is purine metabolism; 7-cyano-7-deazaguanine biosynthesis. Its function is as follows. Catalyzes the ATP-dependent conversion of 7-carboxy-7-deazaguanine (CDG) to 7-cyano-7-deazaguanine (preQ(0)). This Helicobacter acinonychis (strain Sheeba) protein is 7-cyano-7-deazaguanine synthase.